The sequence spans 143 residues: UPF0047 protein MTH_771 (143 aa).

This sequence belongs to the UPF0047 family.

This is UPF0047 protein MTH_771 from Methanothermobacter thermautotrophicus (strain ATCC 29096 / DSM 1053 / JCM 10044 / NBRC 100330 / Delta H) (Methanobacterium thermoautotrophicum).